The primary structure comprises 270 residues: tRNA (guanine-N(1)-)-methyltransferase (270 aa).

S-adenosyl-L-methionine is bound by residues Gly117 and 137–142; that span reads IGDYVL.

This sequence belongs to the RNA methyltransferase TrmD family. As to quaternary structure, homodimer.

It is found in the cytoplasm. The enzyme catalyses guanosine(37) in tRNA + S-adenosyl-L-methionine = N(1)-methylguanosine(37) in tRNA + S-adenosyl-L-homocysteine + H(+). In terms of biological role, specifically methylates guanosine-37 in various tRNAs. The polypeptide is tRNA (guanine-N(1)-)-methyltransferase (Heliobacterium modesticaldum (strain ATCC 51547 / Ice1)).